The chain runs to 330 residues: Peroxidase 42 (330 aa).

An N-terminal signal peptide occupies residues 1–23; that stretch reads MGGKGVMMVAILCLWALSATSEA. 4 disulfides stabilise this stretch: cysteine 40–cysteine 119, cysteine 73–cysteine 78, cysteine 125–cysteine 323, and cysteine 204–cysteine 231. Catalysis depends on histidine 71, which acts as the Proton acceptor. The Ca(2+) site is built by aspartate 72, valine 75, aspartate 79, and serine 81. Position 167 (proline 167) interacts with substrate. Asparagine 170 is a glycosylation site (N-linked (GlcNAc...) asparagine). Histidine 197 provides a ligand contact to heme b. Serine 198 provides a ligand contact to Ca(2+). Aspartate 247, threonine 250, and aspartate 255 together coordinate Ca(2+).

The protein belongs to the peroxidase family. Classical plant (class III) peroxidase subfamily. Requires heme b as cofactor. The cofactor is Ca(2+). As to expression, constitutively expressed in the whole plant, with the highest expression in roots.

The protein localises to the secreted. The enzyme catalyses 2 a phenolic donor + H2O2 = 2 a phenolic radical donor + 2 H2O. Removal of H(2)O(2), oxidation of toxic reductants, biosynthesis and degradation of lignin, suberization, auxin catabolism, response to environmental stresses such as wounding, pathogen attack and oxidative stress. These functions might be dependent on each isozyme/isoform in each plant tissue. Its function is as follows. Might function as heat shock-like defense protein. The protein is Peroxidase 42 (PER42) of Arabidopsis thaliana (Mouse-ear cress).